The primary structure comprises 360 residues: Peptide chain release factor 1 (360 aa).

N5-methylglutamine is present on glutamine 236.

This sequence belongs to the prokaryotic/mitochondrial release factor family. Methylated by PrmC. Methylation increases the termination efficiency of RF1.

The protein localises to the cytoplasm. Functionally, peptide chain release factor 1 directs the termination of translation in response to the peptide chain termination codons UAG and UAA. This chain is Peptide chain release factor 1, found in Limosilactobacillus fermentum (strain NBRC 3956 / LMG 18251) (Lactobacillus fermentum).